A 250-amino-acid chain; its full sequence is V-type proton ATPase subunit D (250 aa).

It belongs to the V-ATPase D subunit family. In terms of assembly, V-ATPase is a heteromultimeric enzyme made up of two complexes: the ATP-hydrolytic V1 complex and the proton translocation V0 complex. The V1 complex consists of three catalytic AB heterodimers that form a heterohexamer, three peripheral stalks each consisting of EG heterodimers, one central rotor including subunits D and F, and the regulatory subunits C and H. The proton translocation complex V0 consists of the proton transport subunit a, a ring of proteolipid subunits c9c'', rotary subunit d, subunits e and f, and two accessory subunits ATP6AP1/Ac45 and ATP6AP2/PRR.

Its function is as follows. Subunit of the V1 complex of vacuolar(H+)-ATPase (V-ATPase), a multisubunit enzyme composed of a peripheral complex (V1) that hydrolyzes ATP and a membrane integral complex (V0) that translocates protons. V-ATPase is responsible for acidifying and maintaining the pH of intracellular compartments and in some cell types, is targeted to the plasma membrane, where it is responsible for acidifying the extracellular environment. The sequence is that of V-type proton ATPase subunit D (VATPD) from Suberites domuncula (Sponge).